Here is a 407-residue protein sequence, read N- to C-terminus: Tyrosine--tRNA ligase 1 (407 aa).

Residue tyrosine 35 coordinates L-tyrosine. The short motif at 40–49 (PTGDSLHVGH) is the 'HIGH' region element. Residues tyrosine 168 and glutamine 172 each coordinate L-tyrosine. The 'KMSKS' region motif lies at 228–232 (KMGKT). Lysine 231 is an ATP binding site. Residues 340 to 406 (SSILDVLVHT…GKKKYYKIVI (67 aa)) enclose the S4 RNA-binding domain.

The protein belongs to the class-I aminoacyl-tRNA synthetase family. TyrS type 1 subfamily. In terms of assembly, homodimer.

The protein resides in the cytoplasm. It carries out the reaction tRNA(Tyr) + L-tyrosine + ATP = L-tyrosyl-tRNA(Tyr) + AMP + diphosphate + H(+). In terms of biological role, catalyzes the attachment of tyrosine to tRNA(Tyr) in a two-step reaction: tyrosine is first activated by ATP to form Tyr-AMP and then transferred to the acceptor end of tRNA(Tyr). In Clostridium acetobutylicum (strain ATCC 824 / DSM 792 / JCM 1419 / IAM 19013 / LMG 5710 / NBRC 13948 / NRRL B-527 / VKM B-1787 / 2291 / W), this protein is Tyrosine--tRNA ligase 1.